The primary structure comprises 862 residues: Valine--tRNA ligase (862 aa).

Residues 44-53 carry the 'HIGH' region motif; that stretch reads NVTGSLHMGH. Cysteine 176, cysteine 179, cysteine 344, cysteine 347, cysteine 417, cysteine 420, cysteine 438, and cysteine 441 together coordinate Zn(2+). The 'KMSKS' region signature appears at 528-532; the sequence is KMSKS. Lysine 531 contacts ATP. A coiled-coil region spans residues 802 to 862; the sequence is RRRQEKRLKE…RIREALSQIG (61 aa).

This sequence belongs to the class-I aminoacyl-tRNA synthetase family. ValS type 1 subfamily. As to quaternary structure, monomer. The cofactor is Zn(2+).

The protein localises to the cytoplasm. It carries out the reaction tRNA(Val) + L-valine + ATP = L-valyl-tRNA(Val) + AMP + diphosphate. Functionally, catalyzes the attachment of valine to tRNA(Val). As ValRS can inadvertently accommodate and process structurally similar amino acids such as threonine, to avoid such errors, it has a 'posttransfer' editing activity that hydrolyzes mischarged Thr-tRNA(Val) in a tRNA-dependent manner. This is Valine--tRNA ligase from Thermus thermophilus (strain ATCC 27634 / DSM 579 / HB8).